A 528-amino-acid polypeptide reads, in one-letter code: Beta-hexosaminidase subunit alpha (528 aa).

An N-terminal signal peptide occupies residues 1-22; sequence MAGCRLWVSLLLAAALACLATA. Residues 23 to 88 constitute a propeptide that is removed on maturation; the sequence is LWPWPQYIQT…PRPSFSKKQQ (66 aa). A disulfide bond links C58 and C104. Residues N115, N157, and N295 are each glycosylated (N-linked (GlcNAc...) asparagine). C277 and C328 are joined by a disulfide. The Proton donor role is filled by E323. The segment at 422–423 is critical for hydrolysis GM2 gangliosides; sequence NR. N-linked (GlcNAc...) asparagine glycosylation is present at N487. C504 and C521 are joined by a disulfide.

This sequence belongs to the glycosyl hydrolase 20 family. As to quaternary structure, there are 3 beta-hexosaminidase isozymes: isozyme A (hexosaminidase A) is a heterodimer composed of one subunit alpha and one subunit beta (chain A and B); isozyme B (hexosaminidase B) is a homodimer of two beta subunits (two chains A and B); isozyme S (hexosaminidase S) is a homodimer of two alpha subunits. The composition of the dimer (isozyme A versus isozyme S) has a significant effect on the substrate specificity of the alpha subunit active site.

It is found in the lysosome. The enzyme catalyses Hydrolysis of terminal non-reducing N-acetyl-D-hexosamine residues in N-acetyl-beta-D-hexosaminides.. It carries out the reaction N-acetyl-beta-D-galactosaminyl-(1-&gt;4)-beta-D-3-sulfogalactosyl-(1-&gt;4)-beta-D-glucosyl-(1&lt;-&gt;1')-ceramide + H2O = a beta-D-3-sulfogalactosyl-(1-&gt;4)-beta-D-glucosyl-(1&lt;-&gt;1')-ceramide + N-acetyl-beta-D-galactosamine. It catalyses the reaction a ganglioside GM2 (d18:1(4E)) + H2O = a ganglioside GM3 (d18:1(4E)) + N-acetyl-beta-D-galactosamine. The catalysed reaction is a ganglioside GM2 + H2O = a ganglioside GM3 + N-acetyl-beta-D-galactosamine. The enzyme catalyses beta-D-GalNAc-(1-&gt;4)-alpha-L-IdoA-(1-&gt;3)-beta-D-GalNAc-4-sulfate-(1-&gt;4)-alpha-L-IdoA-(1-&gt;3)-D-GalNAc-4-sulfate + H2O = alpha-L-IdoA-(1-&gt;3)-beta-D-GalNAc-4-sulfate-(1-&gt;4)-alpha-L-IdoA-(1-&gt;3)-D-GalNAc-4-sulfate + N-acetyl-D-galactosamine. It carries out the reaction N-acetyl-beta-D-6-sulfogalactosaminyl-(1-&gt;4)-alpha-L-iduronyl-(1-&gt;3)-N-acetyl-D-6-sulfogalactosamine + H2O = alpha-L-iduronyl-(1-&gt;3)-N-acetyl-D-6-sulfogalactosamine + N-acetyl-D-6-sulfogalactosamine. With respect to regulation, addition of GM2A stimulates the hydrolysis of sulfated glycosphingolipid SM2 and the ganglioside GM2. Its function is as follows. Hydrolyzes the non-reducing end N-acetyl-D-hexosamine and/or sulfated N-acetyl-D-hexosamine of glycoconjugates, such as the oligosaccharide moieties from proteins and neutral glycolipids, or from certain mucopolysaccharides. The isozyme S is as active as the isozyme A on the anionic bis-sulfated glycans, the chondroitin-6-sulfate trisaccharide (C6S-3), and the dermatan sulfate pentasaccharide, and the sulfated glycosphingolipid SM2. The isozyme B does not hydrolyze each of these substrates, however hydrolyzes efficiently neutral oligosaccharide. Only the isozyme A is responsible for the degradation of GM2 gangliosides in the presence of GM2A. The protein is Beta-hexosaminidase subunit alpha of Rattus norvegicus (Rat).